We begin with the raw amino-acid sequence, 402 residues long: mRNA cap guanine-N(7) methyltransferase (402 aa).

Positions 1 to 11 (MDHVLNPEEKV) are enriched in basic and acidic residues. The segment at 1–75 (MDHVLNPEEK…PRLEEGHGSL (75 aa)) is disordered. The segment covering 35–50 (PKLSASEKSLPGNTKS) has biased composition (polar residues). The segment covering 55–72 (KAAEPDSPPKRPRLEEGH) has biased composition (basic and acidic residues). An mRNA cap 0 methyltransferase domain is found at 94–401 (SRIFHLRNFN…IYLLFAFEKQ (308 aa)). Position 103–104 (103–104 (NN)) interacts with mRNA. S-adenosyl-L-methionine contacts are provided by lysine 107, glycine 131, aspartate 153, aspartate 187, glutamine 210, and tyrosine 215.

The protein belongs to the class I-like SAM-binding methyltransferase superfamily. mRNA cap 0 methyltransferase family.

The protein localises to the nucleus. The catalysed reaction is a 5'-end (5'-triphosphoguanosine)-ribonucleoside in mRNA + S-adenosyl-L-methionine = a 5'-end (N(7)-methyl 5'-triphosphoguanosine)-ribonucleoside in mRNA + S-adenosyl-L-homocysteine. In terms of biological role, catalytic subunit of the mRNA-capping methyltransferase RNMT:RAMAC complex that methylates the N7 position of the added guanosine to the 5'-cap structure of mRNAs. Binds RNA containing 5'-terminal GpppC. This is mRNA cap guanine-N(7) methyltransferase (rnmt) from Xenopus laevis (African clawed frog).